A 445-amino-acid polypeptide reads, in one-letter code: Polyadenylate-binding protein RBP47A (445 aa).

Polar residues predominate over residues M1–S12. Disordered regions lie at residues M1 to Q45 and A93 to D117. The span at T22–Q35 shows a compositional bias: pro residues. Low complexity-rich tracts occupy residues Q36–Q45 and A93–Q108. RRM domains follow at residues K119–F199, L213–P292, and S327–S399.

Belongs to the polyadenylate-binding RBP47 family. In terms of assembly, interacts with the poly(A) tail of mRNA in nucleus. In terms of tissue distribution, expressed in leaves, stems, flowers, and seedlings.

The protein resides in the nucleus. Its subcellular location is the cytoplasmic granule. In terms of biological role, heterogeneous nuclear ribonucleoprotein (hnRNP)-protein binding the poly(A) tail of mRNA and probably involved in some steps of pre-mRNA maturation. The protein is Polyadenylate-binding protein RBP47A (RBP47A) of Arabidopsis thaliana (Mouse-ear cress).